A 233-amino-acid polypeptide reads, in one-letter code: ATP-dependent dethiobiotin synthetase BioD (233 aa).

12-17 (EVGKTY) contacts ATP. Position 16 (threonine 16) interacts with Mg(2+). Lysine 37 is an active-site residue. ATP is bound by residues aspartate 54, 120 to 123 (EGAG), and 186 to 187 (ND). Positions 54 and 120 each coordinate Mg(2+).

This sequence belongs to the dethiobiotin synthetase family. Homodimer. Requires Mg(2+) as cofactor.

Its subcellular location is the cytoplasm. It carries out the reaction (7R,8S)-7,8-diammoniononanoate + CO2 + ATP = (4R,5S)-dethiobiotin + ADP + phosphate + 3 H(+). It functions in the pathway cofactor biosynthesis; biotin biosynthesis; biotin from 7,8-diaminononanoate: step 1/2. Catalyzes a mechanistically unusual reaction, the ATP-dependent insertion of CO2 between the N7 and N8 nitrogen atoms of 7,8-diaminopelargonic acid (DAPA, also called 7,8-diammoniononanoate) to form a ureido ring. The chain is ATP-dependent dethiobiotin synthetase BioD from Alteromonas mediterranea (strain DSM 17117 / CIP 110805 / LMG 28347 / Deep ecotype).